A 380-amino-acid chain; its full sequence is Cytochrome b (380 aa).

The next 4 membrane-spanning stretches (helical) occupy residues 34-54, 78-99, 114-134, and 179-199; these read FGSL…LLAT, WLIR…YLHI, WNTG…GYVL, and FFAL…IHLT. Positions 84 and 98 each coordinate heme b. The heme b site is built by His183 and His197. Position 202 (His202) interacts with a ubiquinone. 4 consecutive transmembrane segments (helical) span residues 227-247, 289-309, 321-341, and 348-368; these read LKDI…ALFS, LGGV…PFLH, ISQL…WIGS, and FIII…ALFP.

Belongs to the cytochrome b family. As to quaternary structure, the cytochrome bc1 complex contains 11 subunits: 3 respiratory subunits (MT-CYB, CYC1 and UQCRFS1), 2 core proteins (UQCRC1 and UQCRC2) and 6 low-molecular weight proteins (UQCRH/QCR6, UQCRB/QCR7, UQCRQ/QCR8, UQCR10/QCR9, UQCR11/QCR10 and a cleavage product of UQCRFS1). This cytochrome bc1 complex then forms a dimer. The cofactor is heme b.

It is found in the mitochondrion inner membrane. Functionally, component of the ubiquinol-cytochrome c reductase complex (complex III or cytochrome b-c1 complex) that is part of the mitochondrial respiratory chain. The b-c1 complex mediates electron transfer from ubiquinol to cytochrome c. Contributes to the generation of a proton gradient across the mitochondrial membrane that is then used for ATP synthesis. The protein is Cytochrome b (MT-CYB) of Buteo buteo (Eurasian buzzard).